Consider the following 229-residue polypeptide: uncharacterized protein (229 aa).

7 helical membrane passes run 21-41 (IYSLVGMGVGLSAFVSYLMLY), 56-76 (MIYYGAAIIELILVFVASSAA), 83-103 (ALPIFLIYSALNGFTLSFIIV), 109-129 (TVFQAFLSSAAVFFAMSIIGV), 141-161 (AMFAALIGVVVASLINLFIGS), 162-182 (GMMSYVISVISVLIFSGLIAS), and 202-222 (WAVAMALSLYLDFINLFISLL).

Belongs to the BI1 family.

The protein resides in the cell membrane. This is an uncharacterized protein from Streptococcus pyogenes serotype M1.